Consider the following 344-residue polypeptide: Nuclear distribution protein nudE homolog 1 (344 aa).

The segment at 1-93 (MEDSGKTFGS…MQHSEGYRQI (93 aa)) is self-association. A coiled-coil region spans residues 18–188 (WRDLAMTYKQ…ELAVQQKQDK (171 aa)). The segment covering 30-47 (ENTQEELREFQEGSREYE) has biased composition (basic and acidic residues). A disordered region spans residues 30–65 (ENTQEELREFQEGSREYEAELETQLQQAETRNRDLL). The tract at residues 88–156 (EGYRQISALE…ERNAFLESEL (69 aa)) is interaction with PAFAH1B1. The segment at 167 to 290 (QRLKDEARDL…QSPSRKSGPA (124 aa)) is interaction with CENPF. The interval 181 to 243 (AVQQKQDKPR…CGLGSPSSGT (63 aa)) is disordered. The segment covering 208–230 (ATGSAPSTPITHQGSSSGLNTPE) has biased composition (polar residues). At S211 the chain carries Phosphoserine. T215, T228, T243, and T246 each carry phosphothreonine. A lipid anchor (S-palmitoyl cysteine; by ZDHHC2, ZDHHC3 and ZDHHC7) is attached at C274. The segment at 279–337 (YDQSPSRKSGPALGRGTKNRDGIDRRPGSTAVGDKGSGKRLEFAKPSSQLSSPALPSTQ) is disordered. S282 carries the post-translational modification Phosphoserine. Over residues 296–305 (KNRDGIDRRP) the composition is skewed to basic and acidic residues. Low complexity predominate over residues 324 to 335 (PSSQLSSPALPS).

It belongs to the nudE family. In terms of assembly, homodimer. Interacts with CNTRL, LIS1, dynein, SLMAP and TCP1. Interacts with CENPF, dynactin, tubulin gamma, PAFAH1B1, PCM1 and PCNT. Interacts with ZNF365. Interacts with GTP-bound RAB9A and RAB9B; the interaction leads to RAB9-dynein motor tethering. Interacts (via C-terminus) with MCRS1 (via C-terminus); phosphorylation of NDE1 inhibits the interaction. Phosphorylated in mitosis. Phosphorylation at Thr-246 is essential for the G2/M transition. As to expression, expressed in brain, heart, kidney, liver, lung, skeletal muscle, spleen and testis.

It is found in the cytoplasm. Its subcellular location is the cytoskeleton. The protein localises to the microtubule organizing center. The protein resides in the centrosome. It localises to the spindle. It is found in the chromosome. Its subcellular location is the centromere. The protein localises to the kinetochore. The protein resides in the cleavage furrow. It localises to the cytoplasmic vesicle membrane. Functionally, required for centrosome duplication and formation and function of the mitotic spindle. Essential for the development of the cerebral cortex. May regulate the production of neurons by controlling the orientation of the mitotic spindle during division of cortical neuronal progenitors of the proliferative ventricular zone of the brain. Orientation of the division plane perpendicular to the layers of the cortex gives rise to two proliferative neuronal progenitors whereas parallel orientation of the division plane yields one proliferative neuronal progenitor and a postmitotic neuron. A premature shift towards a neuronal fate within the progenitor population may result in an overall reduction in the final number of neurons and an increase in the number of neurons in the deeper layers of the cortex. Acts as a RAB9A/B effector that tethers RAB9-associated late endosomes to the dynein motor for their retrograde transport to the trans-Golgi network. This is Nuclear distribution protein nudE homolog 1 from Rattus norvegicus (Rat).